Consider the following 188-residue polypeptide: dTTP/UTP pyrophosphatase (188 aa).

Asp67 acts as the Proton acceptor in catalysis.

The protein belongs to the Maf family. YhdE subfamily. It depends on a divalent metal cation as a cofactor.

It is found in the cytoplasm. It catalyses the reaction dTTP + H2O = dTMP + diphosphate + H(+). The enzyme catalyses UTP + H2O = UMP + diphosphate + H(+). Its function is as follows. Nucleoside triphosphate pyrophosphatase that hydrolyzes dTTP and UTP. May have a dual role in cell division arrest and in preventing the incorporation of modified nucleotides into cellular nucleic acids. The protein is dTTP/UTP pyrophosphatase of Thermococcus kodakarensis (strain ATCC BAA-918 / JCM 12380 / KOD1) (Pyrococcus kodakaraensis (strain KOD1)).